The following is a 782-amino-acid chain: Pyridoxal-dependent decarboxylase domain-containing protein 1 (782 aa).

Basic and acidic residues predominate over residues 26–48; it reads ILEDNQRPSEEEKDGKKYTRKDI. Disordered stretches follow at residues 26–56, 673–695, 702–721, and 726–782; these read ILEDNQRPSEEEKDGKKYTRKDIPGPLQGSG, QTTGLTPPPTPTSAHGKRQAGQK, RNSDAMSETSSISHLEEVES, and PMPE…DSLR. 2 stretches are compositionally biased toward polar residues: residues 703–714 and 747–782; these read NSDAMSETSSIS and AEQSSTPSIVPTETSSEGSQEPSIPSANTAESDSLR.

This sequence belongs to the group II decarboxylase family. The cofactor is pyridoxal 5'-phosphate.

The protein is Pyridoxal-dependent decarboxylase domain-containing protein 1 (pdxdc1) of Xenopus laevis (African clawed frog).